Reading from the N-terminus, the 216-residue chain is Movement and silencing protein TGBp1 (216 aa).

A (+)RNA virus helicase ATP-binding domain is found at Met1–Cys110. In terms of domain architecture, (+)RNA virus helicase C-terminal spans Ser111–Asn216.

This sequence belongs to the Tymovirales TGBp1 protein family. Homodimer and homooligomer. Interacts with capsid protein. Interacts with host AGO1; this interaction targets the host protein for degradation, thereby suppressing the antiviral RNA silencing.

Its subcellular location is the host cytoplasm. Transports viral genome to neighboring plant cells directly through plasmosdesmata, without any budding. The movement protein allows efficient cell to cell propagation, by bypassing the host cell wall barrier. Increases plasmodesma size exclusion limit. Acts as a suppressor of RNA-mediated gene silencing, also known as post-transcriptional gene silencing (PTGS), a mechanism of plant viral defense that limits the accumulation of viral RNAs. The protein is Movement and silencing protein TGBp1 of Lilium formosanum.